The following is a 603-amino-acid chain: Threonine--tRNA ligase (603 aa).

The catalytic stretch occupies residues D197 to P499. 3 residues coordinate Zn(2+): C296, H347, and H476.

The protein belongs to the class-II aminoacyl-tRNA synthetase family. Homodimer. Zn(2+) is required as a cofactor.

It is found in the cytoplasm. The enzyme catalyses tRNA(Thr) + L-threonine + ATP = L-threonyl-tRNA(Thr) + AMP + diphosphate + H(+). Functionally, catalyzes the attachment of threonine to tRNA(Thr) in a two-step reaction: L-threonine is first activated by ATP to form Thr-AMP and then transferred to the acceptor end of tRNA(Thr). Also edits incorrectly charged L-seryl-tRNA(Thr). This Synechocystis sp. (strain ATCC 27184 / PCC 6803 / Kazusa) protein is Threonine--tRNA ligase.